Reading from the N-terminus, the 265-residue chain is Putative hydro-lyase PA14_37210 (265 aa).

This sequence belongs to the D-glutamate cyclase family.

This is Putative hydro-lyase PA14_37210 from Pseudomonas aeruginosa (strain UCBPP-PA14).